The primary structure comprises 96 residues: NADH-ubiquinone oxidoreductase chain 6 (96 aa).

The next 2 helical transmembrane spans lie at 24–44 (MSLL…LGSI) and 48–68 (WFAY…FIYV).

This sequence belongs to the complex I subunit 6 family.

The protein resides in the mitochondrion membrane. It carries out the reaction a ubiquinone + NADH + 5 H(+)(in) = a ubiquinol + NAD(+) + 4 H(+)(out). Functionally, core subunit of the mitochondrial membrane respiratory chain NADH dehydrogenase (Complex I) that is believed to belong to the minimal assembly required for catalysis. Complex I functions in the transfer of electrons from NADH to the respiratory chain. The immediate electron acceptor for the enzyme is believed to be ubiquinone. The sequence is that of NADH-ubiquinone oxidoreductase chain 6 (ND6) from Albinaria turrita (Door snail).